A 579-amino-acid polypeptide reads, in one-letter code: MEFPRKRRGRDSQPLQSEFMTDTTVESLPQNPFASLLSTRTGVSAPSGIREAHSQMEKRRRDKMNHLIQKLSSMIPPHIPTAHKLDKLSVLRRAVQYLRSLRGMTELYLGENSKPSFIQDKELSHLILKAAEGFLFVVGCERGRIFYVSKSVSKTLRYDQASLIGQNLFDFLHPKDVAKVKEQLSCDGSPREKPIDTKTSQVYSHPYTGRPRMHSGSRRSFFFRMKSCTVPVKEEQPCSSCSKKKDHRKFHTVHCTGYLRSWPLNVVGMEKESGGGKDSGPLTCLVAMGRLHPYIVPQKSGKINVRPAEFITRFAMNGKFVYVDQRATAILGYLPQELLGTSCYEYFHQDDHSSLTDKHKAVLQSKEKILTDSYKFRVKDGAFVTLKSEWFSFTNPWTKELEYIVSVNTLVLGRSETRLSLLHCGGSSQSSEDSFRQSCINVPGVSTGTVLGAGSIGTDIANEVLSLQRLHSSSPEDASPSEEVRDDCSVNGGNAYGPASTREPFAVSPSETEVLEAARQHQSTEPAHPHGPLPGDSAQLGFDVLCDSDSIDMAAFMNYLEAEGGLGDPGDFSDIQWAL.

An interaction with PER2 region spans residues 1–198 (MEFPRKRRGR…SPREKPIDTK (198 aa)). The short motif at 4-9 (PRKRRG) is the Nuclear localization signal element. The interval 40 to 61 (RTGVSAPSGIREAHSQMEKRRR) is disordered. A bHLH domain is found at 48 to 101 (GIREAHSQMEKRRRDKMNHLIQKLSSMIPPHIPTAHKLDKLSVLRRAVQYLRSL). Residues 50 to 59 (REAHSQMEKR) are compositionally biased toward basic and acidic residues. Positions 118 to 128 (IQDKELSHLIL) match the Nuclear export signal 1 motif. Residues 119 to 190 (QDKELSHLIL…KEQLSCDGSP (72 aa)) enclose the PAS 1 domain. Residues 186–196 (CDGSPREKPID) are compositionally biased toward basic and acidic residues. A disordered region spans residues 186–213 (CDGSPREKPIDTKTSQVYSHPYTGRPRM). Lys226 is covalently cross-linked (Glycyl lysine isopeptide (Lys-Gly) (interchain with G-Cter in SUMO2 and SUMO3)). A Glycyl lysine isopeptide (Lys-Gly) (interchain with G-Cter in SUMO2) cross-link involves residue Lys233. The PAS 2 domain occupies 296 to 366 (VPQKSGKINV…DKHKAVLQSK (71 aa)). The Nuclear export signal 2 signature appears at 331–339 (LGYLPQELL). Positions 371–414 (TDSYKFRVKDGAFVTLKSEWFSFTNPWTKELEYIVSVNTLVLGR) constitute a PAC domain. The segment at 469-536 (RLHSSSPEDA…AHPHGPLPGD (68 aa)) is disordered.

In terms of assembly, component of the circadian core oscillator, which includes the CRY proteins, CLOCK, or NPAS2, BMAL1 or BMAL2, CSNK1D and/or CSNK1E, TIMELESS and the PER proteins. Interacts directly with CLOCK to form the BMAL2-CLOCK transactivator. Can form heterodimers or homodimers which interact directly with CLOCK to form the transcription activator. Interacts with NPAS2 and HIF1A. Interacts with PER2. As to expression, expressed in the suprachiasmatic nucleus (SCN).

It localises to the nucleus. Transcriptional activator which forms a core component of the circadian clock. The circadian clock, an internal time-keeping system, regulates various physiological processes through the generation of approximately 24 hour circadian rhythms in gene expression, which are translated into rhythms in metabolism and behavior. It is derived from the Latin roots 'circa' (about) and 'diem' (day) and acts as an important regulator of a wide array of physiological functions including metabolism, sleep, body temperature, blood pressure, endocrine, immune, cardiovascular, and renal function. Consists of two major components: the central clock, residing in the suprachiasmatic nucleus (SCN) of the brain, and the peripheral clocks that are present in nearly every tissue and organ system. Both the central and peripheral clocks can be reset by environmental cues, also known as Zeitgebers (German for 'timegivers'). The predominant Zeitgeber for the central clock is light, which is sensed by retina and signals directly to the SCN. The central clock entrains the peripheral clocks through neuronal and hormonal signals, body temperature and feeding-related cues, aligning all clocks with the external light/dark cycle. Circadian rhythms allow an organism to achieve temporal homeostasis with its environment at the molecular level by regulating gene expression to create a peak of protein expression once every 24 hours to control when a particular physiological process is most active with respect to the solar day. Transcription and translation of core clock components (CLOCK, NPAS2, BMAL1, BMAL2, PER1, PER2, PER3, CRY1 and CRY2) plays a critical role in rhythm generation, whereas delays imposed by post-translational modifications (PTMs) are important for determining the period (tau) of the rhythms (tau refers to the period of a rhythm and is the length, in time, of one complete cycle). A diurnal rhythm is synchronized with the day/night cycle, while the ultradian and infradian rhythms have a period shorter and longer than 24 hours, respectively. Disruptions in the circadian rhythms contribute to the pathology of cardiovascular diseases, cancer, metabolic syndromes and aging. A transcription/translation feedback loop (TTFL) forms the core of the molecular circadian clock mechanism. Transcription factors, CLOCK or NPAS2 and BMAL1 or BMAL2, form the positive limb of the feedback loop, act in the form of a heterodimer and activate the transcription of core clock genes and clock-controlled genes (involved in key metabolic processes), harboring E-box elements (5'-CACGTG-3') within their promoters. The core clock genes: PER1/2/3 and CRY1/2 which are transcriptional repressors form the negative limb of the feedback loop and interact with the CLOCK|NPAS2-BMAL1|BMAL2 heterodimer inhibiting its activity and thereby negatively regulating their own expression. This heterodimer also activates nuclear receptors NR1D1/2 and RORA/B/G, which form a second feedback loop and which activate and repress BMAL1 transcription, respectively. The CLOCK-BMAL2 heterodimer activates the transcription of SERPINE1/PAI1 and BHLHE40/DEC1. The chain is Basic helix-loop-helix ARNT-like protein 2 (Bmal2) from Mus musculus (Mouse).